The primary structure comprises 692 residues: Enzymatic polyprotein (692 aa).

Residue Asp-36 is the For protease activity of the active site. In terms of domain architecture, Reverse transcriptase spans 227-411 (LKKGLIRESQ…QEIEYLGLKI (185 aa)).

It belongs to the caulimoviridae enzymatic polyprotein family.

The enzyme catalyses DNA(n) + a 2'-deoxyribonucleoside 5'-triphosphate = DNA(n+1) + diphosphate. Its function is as follows. Encodes for at least two polypeptides: protease (PR) and reverse transcriptase (RT). The protease processes the polyprotein in cis. Reverse transcriptase is multifunctional enzyme that converts the viral RNA genome into dsDNA in viral cytoplasmic capsids. This enzyme displays a DNA polymerase activity that can copy either DNA or RNA templates, and a ribonuclease H (RNase H) activity that cleaves the RNA strand of RNA-DNA heteroduplexes in a partially processive 3'- to 5'-endonucleasic mode. Neo-synthesized pregenomic RNA (pgRNA) are encapsidated, and reverse-transcribed inside the nucleocapsid. Partial (+)DNA is synthesized from the (-)DNA template and generates the relaxed circular DNA (RC-DNA) genome. After budding and infection, the RC-DNA migrates in the nucleus, and is converted into a plasmid-like covalently closed circular DNA (cccDNA). This Soybean chlorotic mottle virus protein is Enzymatic polyprotein.